Reading from the N-terminus, the 624-residue chain is NADPH-dependent diflavin oxidoreductase 1 (624 aa).

One can recognise a Flavodoxin-like domain in the interval 6-168 (IVILYGSETG…VYYEFEKRII (163 aa)). Residues 12–17 (SETGNA), 59–62 (STTG), 106–115 (LGDSSYPRFN), and glutamate 142 each bind FMN. One can recognise an FAD-binding FR-type domain in the interval 226–474 (ETIRHGTVKK…LQNNHLLHED (249 aa)). Residues arginine 384, 414 to 417 (RFYS), and 446 to 449 (GLCT) each bind FAD. Residues 539 to 540 (SR) and 548 to 552 (AKYVQ) contribute to the NADP(+) site. Residue tryptophan 624 coordinates FAD.

It belongs to the NADPH-dependent diflavin oxidoreductase NDOR1 family. The protein in the N-terminal section; belongs to the flavodoxin family. In the C-terminal section; belongs to the flavoprotein pyridine nucleotide cytochrome reductase family. Interacts with DRE2; as part of the cytosolic iron-sulfur (Fe-S) protein assembly (CIA) machinery. FAD is required as a cofactor. It depends on FMN as a cofactor.

The protein localises to the cytoplasm. Its subcellular location is the mitochondrion. The catalysed reaction is 2 oxidized [2Fe-2S]-[protein] + NADPH = 2 reduced [2Fe-2S]-[protein] + NADP(+) + H(+). In terms of biological role, NADPH-dependent reductase which is a central component of the cytosolic iron-sulfur (Fe-S) protein assembly (CIA) machinery. Transfers electrons from NADPH via its FAD and FMN prosthetic groups to the [2Fe-2S] cluster of DRE2, another key component of the CIA machinery. In turn, this reduced cluster provides electrons for assembly of cytosolic iron-sulfur cluster proteins. Positively controls H(2)O(2)-induced cell death. The chain is NADPH-dependent diflavin oxidoreductase 1 from Kluyveromyces lactis (strain ATCC 8585 / CBS 2359 / DSM 70799 / NBRC 1267 / NRRL Y-1140 / WM37) (Yeast).